The sequence spans 280 residues: Formamidopyrimidine-DNA glycosylase (280 aa).

Pro-2 (schiff-base intermediate with DNA) is an active-site residue. The active-site Proton donor is Glu-3. The Proton donor; for beta-elimination activity role is filled by Lys-59. DNA-binding residues include His-92 and Arg-111. The FPG-type zinc finger occupies 239–273; that stretch reads NVYGQTGLPCNRCGTPIVKTKVAQRGTHYCPQCQQ. Arg-263 functions as the Proton donor; for delta-elimination activity in the catalytic mechanism.

The protein belongs to the FPG family. Monomer. Requires Zn(2+) as cofactor.

The catalysed reaction is Hydrolysis of DNA containing ring-opened 7-methylguanine residues, releasing 2,6-diamino-4-hydroxy-5-(N-methyl)formamidopyrimidine.. It catalyses the reaction 2'-deoxyribonucleotide-(2'-deoxyribose 5'-phosphate)-2'-deoxyribonucleotide-DNA = a 3'-end 2'-deoxyribonucleotide-(2,3-dehydro-2,3-deoxyribose 5'-phosphate)-DNA + a 5'-end 5'-phospho-2'-deoxyribonucleoside-DNA + H(+). Functionally, involved in base excision repair of DNA damaged by oxidation or by mutagenic agents. Acts as a DNA glycosylase that recognizes and removes damaged bases. Has a preference for oxidized purines, such as 7,8-dihydro-8-oxoguanine (8-oxoG). Has AP (apurinic/apyrimidinic) lyase activity and introduces nicks in the DNA strand. Cleaves the DNA backbone by beta-delta elimination to generate a single-strand break at the site of the removed base with both 3'- and 5'-phosphates. The chain is Formamidopyrimidine-DNA glycosylase from Enterococcus faecalis (strain ATCC 700802 / V583).